The following is a 1304-amino-acid chain: DNA-directed RNA polymerase subunit beta' (1304 aa).

Zn(2+) contacts are provided by Cys-60, Cys-62, Cys-75, and Cys-78. Asp-541, Asp-543, and Asp-545 together coordinate Mg(2+). Positions 887, 963, 970, and 973 each coordinate Zn(2+).

It belongs to the RNA polymerase beta' chain family. In terms of assembly, the RNAP catalytic core consists of 2 alpha, 1 beta, 1 beta' and 1 omega subunit. When a sigma factor is associated with the core the holoenzyme is formed, which can initiate transcription. Mg(2+) is required as a cofactor. Requires Zn(2+) as cofactor.

The catalysed reaction is RNA(n) + a ribonucleoside 5'-triphosphate = RNA(n+1) + diphosphate. DNA-dependent RNA polymerase catalyzes the transcription of DNA into RNA using the four ribonucleoside triphosphates as substrates. The chain is DNA-directed RNA polymerase subunit beta' from Acidothermus cellulolyticus (strain ATCC 43068 / DSM 8971 / 11B).